A 370-amino-acid chain; its full sequence is Platelet-derived growth factor D (370 aa).

Positions 1 to 18 are cleaved as a signal peptide; that stretch reads MHRLIFVYTLICANFCSC. One can recognise a CUB domain in the interval 52–170; it reads RDETIQVKGN…PGFKIYYSLL (119 aa). Cysteine 109 and cysteine 131 are disulfide-bonded. Asparagine 276 carries N-linked (GlcNAc...) asparagine glycosylation. 2 cysteine pairs are disulfide-bonded: cysteine 302/cysteine 360 and cysteine 306/cysteine 362.

Belongs to the PDGF/VEGF growth factor family. As to quaternary structure, homodimer; disulfide-linked. Interacts with PDGFRB homodimers, and with heterodimers formed by PDGFRA and PDGFRB. Activated by proteolytic cleavage. Proteolytic removal of the N-terminal CUB domain releasing the core domain is necessary for unmasking the receptor-binding epitopes of the core domain. Cleavage after Arg-247 or Arg-249 by urokinase plasminogen activator gives rise to the active form. In terms of tissue distribution, expressed at high levels in the heart, pancreas, adrenal gland and ovary and at low levels in placenta, liver, kidney, prostate, testis, small intestine, spleen and colon. In the kidney, expressed by the visceral epithelial cells of the glomeruli. A widespread expression is also seen in the medial smooth muscle cells of arteries and arterioles, as well as in smooth muscle cells of vasa rectae in the medullary area. Expressed in the adventitial connective tissue surrounding the suprarenal artery. In chronic obstructive nephropathy, a persistent expression is seen in glomerular visceral epithelial cells and vascular smooth muscle cells, as well as de novo expression by periglomerular interstitial cells and by some neointimal cells of atherosclerotic vessels. Expression in normal prostate is seen preferentially in the mesenchyme of the gland while expression is increased and more profuse in prostate carcinoma. Expressed in many ovarian, lung, renal and brain cancer-derived cell lines.

The protein localises to the secreted. In terms of biological role, growth factor that plays an essential role in the regulation of embryonic development, cell proliferation, cell migration, survival and chemotaxis. Potent mitogen for cells of mesenchymal origin. Plays an important role in wound healing. Induces macrophage recruitment, increased interstitial pressure, and blood vessel maturation during angiogenesis. Can initiate events that lead to a mesangial proliferative glomerulonephritis, including influx of monocytes and macrophages and production of extracellular matrix. The chain is Platelet-derived growth factor D (PDGFD) from Homo sapiens (Human).